A 449-amino-acid polypeptide reads, in one-letter code: Elongation factor 1-alpha 1 (449 aa).

Positions 5-230 (KFHINIVVIG…DQINEPKRPS (226 aa)) constitute a tr-type G domain. The interval 14–21 (GHVDSGKS) is G1. Residue 14 to 21 (GHVDSGKS) participates in GTP binding. Lysine 55 is modified (N6,N6-dimethyllysine). Residues 70 to 74 (GITID) form a G2 region. Lysine 79 is modified (N6,N6,N6-trimethyllysine). Positions 91 to 94 (DAPG) are G3. Residues 91-95 (DAPGH) and 153-156 (NKMD) each bind GTP. The interval 153–156 (NKMD) is G4. Lysine 187 is subject to N6,N6,N6-trimethyllysine. Residues 194-196 (SGF) are G5. Residue lysine 261 is modified to N6-methyllysine. 2 positions are modified to N6,N6,N6-trimethyllysine: lysine 306 and lysine 396. Glycyl lysine isopeptide (Lys-Gly) (interchain with G-Cter in ubiquitin) cross-links involve residues lysine 438 and lysine 441.

The protein belongs to the TRAFAC class translation factor GTPase superfamily. Classic translation factor GTPase family. EF-Tu/EF-1A subfamily.

It localises to the cytoplasm. In terms of biological role, this protein promotes the GTP-dependent binding of aminoacyl-tRNA to the A-site of ribosomes during protein biosynthesis. The polypeptide is Elongation factor 1-alpha 1 (A1) (Arabidopsis thaliana (Mouse-ear cress)).